We begin with the raw amino-acid sequence, 938 residues long: Isoleucine--tRNA ligase (938 aa).

A 'HIGH' region motif is present at residues 58–68 (PYANGNIHLGH). L-isoleucyl-5'-AMP is bound at residue Glu562. The 'KMSKS' region signature appears at 603-607 (KMSKS). Lys606 contributes to the ATP binding site. Residues Cys901, Cys904, Cys921, and Cys924 each contribute to the Zn(2+) site.

This sequence belongs to the class-I aminoacyl-tRNA synthetase family. IleS type 1 subfamily. As to quaternary structure, monomer. Requires Zn(2+) as cofactor.

It is found in the cytoplasm. The catalysed reaction is tRNA(Ile) + L-isoleucine + ATP = L-isoleucyl-tRNA(Ile) + AMP + diphosphate. Catalyzes the attachment of isoleucine to tRNA(Ile). As IleRS can inadvertently accommodate and process structurally similar amino acids such as valine, to avoid such errors it has two additional distinct tRNA(Ile)-dependent editing activities. One activity is designated as 'pretransfer' editing and involves the hydrolysis of activated Val-AMP. The other activity is designated 'posttransfer' editing and involves deacylation of mischarged Val-tRNA(Ile). The sequence is that of Isoleucine--tRNA ligase from Glaesserella parasuis serovar 5 (strain SH0165) (Haemophilus parasuis).